Consider the following 1142-residue polypeptide: Envelopment polyprotein (1142 aa).

Positions methionine 1 to threonine 21 are cleaved as a signal peptide. The Lumenal segment spans residues arginine 22–serine 489. 6 disulfide bridges follow: cysteine 31–cysteine 156, cysteine 65–cysteine 162, cysteine 114–cysteine 133, cysteine 138–cysteine 143, cysteine 180–cysteine 190, and cysteine 215–cysteine 253. N-linked (GlcNAc...) asparagine; by host glycosylation is present at asparagine 139. Residue asparagine 353 is glycosylated (N-linked (GlcNAc...) asparagine; by host). 4 disulfides stabilise this stretch: cysteine 382–cysteine 441, cysteine 386–cysteine 395, cysteine 411–cysteine 430, and cysteine 458–cysteine 481. The N-linked (GlcNAc...) asparagine; by host glycan is linked to asparagine 405. A helical transmembrane segment spans residues threonine 490–valine 510. Topologically, residues serine 511–cysteine 633 are cytoplasmic. The binding to the ribonucleoprotein stretch occupies residues cysteine 522–lysine 539. 2 CCHC-type zinc fingers span residues cysteine 551 to cysteine 571 and cysteine 576 to cysteine 597. 3 binding to the ribonucleoprotein regions span residues phenylalanine 594–leucine 611, lysine 598–lysine 609, and lysine 617–serine 631. Residues lysine 617–cysteine 640 enclose the ITAM domain. Positions tyrosine 621–leucine 624 match the YxxL motif. A helical membrane pass occupies residues phenylalanine 634–alanine 654. The Lumenal portion of the chain corresponds to aspartate 655–asparagine 1110. 8 cysteine pairs are disulfide-bonded: cysteine 741/cysteine 776, cysteine 745/cysteine 783, cysteine 757/cysteine 890, cysteine 771/cysteine 901, cysteine 786/cysteine 909, cysteine 812/cysteine 821, cysteine 829/cysteine 838, and cysteine 869/cysteine 873. A fusion loop region spans residues tyrosine 763–cysteine 783. Asparagine 933 is a glycosylation site (N-linked (GlcNAc...) asparagine; by host). Disulfide bonds link cysteine 975-cysteine 1005, cysteine 998-cysteine 1050, cysteine 1015-cysteine 1020, cysteine 1051-cysteine 1056, and cysteine 1090-cysteine 1094. Residues tryptophan 1111–cysteine 1131 traverse the membrane as a helical segment. A binding to the ribonucleoprotein region spans residues leucine 1127–serine 1142. The Cytoplasmic segment spans residues cysteine 1132–serine 1142.

This sequence belongs to the hantavirus envelope glycoprotein family. As to quaternary structure, homodimer. Homotetramer; forms heterotetrameric Gn-Gc spikes in the pre-fusion conformation. Interacts (via C-terminus) with the nucleoprotein. Interacts with host TUFM; this interaction contributes to the virus-induced degradation of mitochondria by autophagy, which leads to degradation of host MAVS and inhibition of type I interferon (IFN) responses. Interacts with host MAP1LC3B; this interaction contributes to the virus-induced degradation of mitochondria by autophagy, which leads to degradation of host MAVS and inhibition of type I interferon (IFN) responses. In terms of assembly, homodimer. Homotetramer; forms heterotetrameric Gn-Gc spikes in the pre-fusion conformation. Homotrimer; forms homotrimer in the post-fusion conformation at acidic pH. Interacts (via C-terminus) with the nucleoprotein. In terms of processing, envelope polyprotein precursor is quickly cleaved in vivo just after synthesis, presumably by host signal peptidase.

It is found in the virion membrane. Its subcellular location is the host cell surface. The protein localises to the host Golgi apparatus membrane. It localises to the host endoplasmic reticulum membrane. The protein resides in the host mitochondrion. Its function is as follows. Forms homotetramers with glycoprotein C at the surface of the virion. Attaches the virion to host cell receptors including integrin alpha5/ITGB1. This attachment induces virion internalization predominantly through clathrin-dependent endocytosis. Mediates the assembly and budding of infectious virus particles through its interaction with the nucleocapsid protein and the viral genome. May dysregulate normal immune and endothelial cell responses through an ITAM motif. Translocates to mitochondria, binds to host TUFM and recruits MAP1LC3B. These interactions induce mitochondrial autophagy and therefore destruction of host MAVS leading to inhibition of type I interferon (IFN) responses. Concomitant breakdown of glycoprotein N is apparently prevented by the nucleoprotein that may inhibit Gn-stimulated autophagosome-lysosome fusion. Interacts with the viral genomic RNA. Functionally, forms homotetramers with glycoprotein N at the surface of the virion. Attaches the virion to host cell receptors including integrin ITGAV/ITGB3. This attachment induces virion internalization predominantly through clathrin-dependent endocytosis. Class II fusion protein that promotes fusion of viral membrane with host endosomal membrane after endocytosis of the virion. In Microtus pennsylvanicus (Meadow vole), this protein is Envelopment polyprotein (GP).